We begin with the raw amino-acid sequence, 237 residues long: Ergosterol biosynthesis protein 29 (237 aa).

A helical transmembrane segment spans residues 36–56; sequence ITLFLIVVGTLAFFNELYITI.

The protein resides in the endoplasmic reticulum membrane. Part of the third module of ergosterol biosynthesis pathway that includes the late steps of the pathway. ERG29 regulates the activity of the iron-containing C4-methylsterol oxidase ERG25. The third module or late pathway involves the ergosterol synthesis itself through consecutive reactions that mainly occur in the endoplasmic reticulum (ER) membrane. Firstly, the squalene synthase ERG9 catalyzes the condensation of 2 farnesyl pyrophosphate moieties to form squalene, which is the precursor of all steroids. Squalene synthase is crucial for balancing the incorporation of farnesyl diphosphate (FPP) into sterol and nonsterol isoprene synthesis. Secondly, the squalene epoxidase ERG1 catalyzes the stereospecific oxidation of squalene to (S)-2,3-epoxysqualene, which is considered to be a rate-limiting enzyme in steroid biosynthesis. Then, the lanosterol synthase ERG7 catalyzes the cyclization of (S)-2,3 oxidosqualene to lanosterol, a reaction that forms the sterol core. In the next steps, lanosterol is transformed to zymosterol through a complex process involving various demethylation, reduction and desaturation reactions. The lanosterol 14-alpha-demethylase ERG11 (also known as CYP51) catalyzes C14-demethylation of lanosterol to produce 4,4'-dimethyl cholesta-8,14,24-triene-3-beta-ol, which is critical for ergosterol biosynthesis. The C-14 reductase ERG24 reduces the C14=C15 double bond of 4,4-dimethyl-cholesta-8,14,24-trienol to produce 4,4-dimethyl-cholesta-8,24-dienol. 4,4-dimethyl-cholesta-8,24-dienol is substrate of the C-4 demethylation complex ERG25-ERG26-ERG27 in which ERG25 catalyzes the three-step monooxygenation required for the demethylation of 4,4-dimethyl and 4alpha-methylsterols, ERG26 catalyzes the oxidative decarboxylation that results in a reduction of the 3-beta-hydroxy group at the C-3 carbon to an oxo group, and ERG27 is responsible for the reduction of the keto group on the C-3. ERG28 has a role as a scaffold to help anchor ERG25, ERG26 and ERG27 to the endoplasmic reticulum and ERG29 regulates the activity of the iron-containing C4-methylsterol oxidase ERG25. Then, the sterol 24-C-methyltransferase ERG6 catalyzes the methyl transfer from S-adenosyl-methionine to the C-24 of zymosterol to form fecosterol. The C-8 sterol isomerase ERG2 catalyzes the reaction which results in unsaturation at C-7 in the B ring of sterols and thus converts fecosterol to episterol. The sterol-C5-desaturase ERG3 then catalyzes the introduction of a C-5 double bond in the B ring to produce 5-dehydroepisterol. The C-22 sterol desaturase ERG5 further converts 5-dehydroepisterol into ergosta-5,7,22,24(28)-tetraen-3beta-ol by forming the C-22(23) double bond in the sterol side chain. Finally, ergosta-5,7,22,24(28)-tetraen-3beta-ol is substrate of the C-24(28) sterol reductase ERG4 to produce ergosterol. Functionally, plays a role in maintaining mitochondrial and plasma membrane integrity and consequently impacting the iron homeostasis, respiratory metabolism and antioxidant response. This chain is Ergosterol biosynthesis protein 29, found in Saccharomyces cerevisiae (strain ATCC 204508 / S288c) (Baker's yeast).